Here is a 134-residue protein sequence, read N- to C-terminus: Profilin (134 aa).

This sequence belongs to the profilin family. Occurs in many kinds of cells as a complex with monomeric actin in a 1:1 ratio.

It is found in the cytoplasm. The protein localises to the cytoskeleton. Its function is as follows. Binds to actin and affects the structure of the cytoskeleton. At high concentrations, profilin prevents the polymerization of actin, whereas it enhances it at low concentrations. By binding to PIP2, it inhibits the formation of IP3 and DG. This chain is Profilin, found in Apium graveolens (Celery).